We begin with the raw amino-acid sequence, 195 residues long: Imidazoleglycerol-phosphate dehydratase (195 aa).

It belongs to the imidazoleglycerol-phosphate dehydratase family.

The protein resides in the cytoplasm. It catalyses the reaction D-erythro-1-(imidazol-4-yl)glycerol 3-phosphate = 3-(imidazol-4-yl)-2-oxopropyl phosphate + H2O. It participates in amino-acid biosynthesis; L-histidine biosynthesis; L-histidine from 5-phospho-alpha-D-ribose 1-diphosphate: step 6/9. This is Imidazoleglycerol-phosphate dehydratase from Deinococcus radiodurans (strain ATCC 13939 / DSM 20539 / JCM 16871 / CCUG 27074 / LMG 4051 / NBRC 15346 / NCIMB 9279 / VKM B-1422 / R1).